Here is a 252-residue protein sequence, read N- to C-terminus: Uracil-DNA glycosylase (252 aa).

Aspartate 87 (proton acceptor) is an active-site residue.

The protein belongs to the uracil-DNA glycosylase (UDG) superfamily. UNG family.

It is found in the host nucleus. It catalyses the reaction Hydrolyzes single-stranded DNA or mismatched double-stranded DNA and polynucleotides, releasing free uracil.. In terms of biological role, excises uracil residues from the DNA which can arise as a result of misincorporation of dUMP residues by DNA polymerase or deamination of cytosines. Therefore may reduce deleterious uracil incorporation into the viral genome, particularly in terminally differentiated cells which lack DNA repair enzymes. This Alcelaphine herpesvirus 1 (strain C500) (AlHV-1) protein is Uracil-DNA glycosylase (46).